The primary structure comprises 365 residues: Phospho-N-acetylmuramoyl-pentapeptide-transferase (365 aa).

The next 10 helical transmembrane spans lie at 22 to 42, 74 to 94, 95 to 115, 134 to 154, 169 to 189, 201 to 221, 240 to 260, 268 to 288, 292 to 312, and 342 to 362; these read YVSV…LFLG, TMGG…WGSL, SSIY…IGFF, KFAL…YLLS, LHIP…INGS, GLAI…AYIQ, LAEV…FLWF, FMGD…AVMI, LIFF…MLQV, and KVVI…LVAI.

The protein belongs to the glycosyltransferase 4 family. MraY subfamily. Requires Mg(2+) as cofactor.

Its subcellular location is the cell inner membrane. The enzyme catalyses UDP-N-acetyl-alpha-D-muramoyl-L-alanyl-gamma-D-glutamyl-meso-2,6-diaminopimeloyl-D-alanyl-D-alanine + di-trans,octa-cis-undecaprenyl phosphate = di-trans,octa-cis-undecaprenyl diphospho-N-acetyl-alpha-D-muramoyl-L-alanyl-D-glutamyl-meso-2,6-diaminopimeloyl-D-alanyl-D-alanine + UMP. It functions in the pathway cell wall biogenesis; peptidoglycan biosynthesis. Catalyzes the initial step of the lipid cycle reactions in the biosynthesis of the cell wall peptidoglycan: transfers peptidoglycan precursor phospho-MurNAc-pentapeptide from UDP-MurNAc-pentapeptide onto the lipid carrier undecaprenyl phosphate, yielding undecaprenyl-pyrophosphoryl-MurNAc-pentapeptide, known as lipid I. This Francisella philomiragia subsp. philomiragia (strain ATCC 25017 / CCUG 19701 / FSC 153 / O#319-036) protein is Phospho-N-acetylmuramoyl-pentapeptide-transferase.